We begin with the raw amino-acid sequence, 1297 residues long: Phosphoribosylformylglycinamidine synthase (1297 aa).

Residues 307-318 and A678 contribute to the ATP site; that span reads GASTGSGGEIRD. E718, N722, and D886 together coordinate Mg(2+). One can recognise a Glutamine amidotransferase type-1 domain in the interval 1044–1297; that stretch reads MAILREQGVN…MFQNARKNLA (254 aa). C1137 functions as the Nucleophile in the catalytic mechanism. Catalysis depends on residues H1262 and E1264.

It in the N-terminal section; belongs to the FGAMS family. In terms of assembly, monomer.

The protein resides in the cytoplasm. It catalyses the reaction N(2)-formyl-N(1)-(5-phospho-beta-D-ribosyl)glycinamide + L-glutamine + ATP + H2O = 2-formamido-N(1)-(5-O-phospho-beta-D-ribosyl)acetamidine + L-glutamate + ADP + phosphate + H(+). The protein operates within purine metabolism; IMP biosynthesis via de novo pathway; 5-amino-1-(5-phospho-D-ribosyl)imidazole from N(2)-formyl-N(1)-(5-phospho-D-ribosyl)glycinamide: step 1/2. Functionally, phosphoribosylformylglycinamidine synthase involved in the purines biosynthetic pathway. Catalyzes the ATP-dependent conversion of formylglycinamide ribonucleotide (FGAR) and glutamine to yield formylglycinamidine ribonucleotide (FGAM) and glutamate. This Vibrio vulnificus (strain YJ016) protein is Phosphoribosylformylglycinamidine synthase.